Consider the following 376-residue polypeptide: N-acetyldiaminopimelate deacetylase (376 aa).

Asp-69 is a catalytic residue. The Proton acceptor role is filled by Glu-128.

This sequence belongs to the peptidase M20A family. N-acetyldiaminopimelate deacetylase subfamily.

It carries out the reaction N-acetyl-(2S,6S)-2,6-diaminopimelate + H2O = (2S,6S)-2,6-diaminopimelate + acetate. Its pathway is amino-acid biosynthesis; L-lysine biosynthesis via DAP pathway; LL-2,6-diaminopimelate from (S)-tetrahydrodipicolinate (acetylase route): step 3/3. In terms of biological role, catalyzes the conversion of N-acetyl-diaminopimelate to diaminopimelate and acetate. This chain is N-acetyldiaminopimelate deacetylase, found in Streptococcus pneumoniae (strain 70585).